The following is a 304-amino-acid chain: Negative regulator of the PHO system (304 aa).

The Protein kinase domain maps to 7–297 (FKQLEKVGNG…AKDALNHPWF (291 aa)). ATP is bound by residues 13 to 21 (VGNGTYATV) and Lys36. Catalysis depends on Asp133, which acts as the Proton acceptor.

The protein belongs to the protein kinase superfamily. CMGC Ser/Thr protein kinase family. CDC2/CDKX subfamily. Interacts with a number of cyclins.

The enzyme catalyses L-seryl-[protein] + ATP = O-phospho-L-seryl-[protein] + ADP + H(+). It carries out the reaction L-threonyl-[protein] + ATP = O-phospho-L-threonyl-[protein] + ADP + H(+). In terms of biological role, when phosphate concentrations are high it phosphorylates the PHO4 transcription factor thus establishing repression. The chain is Negative regulator of the PHO system (PHO85) from Kluyveromyces lactis (strain ATCC 8585 / CBS 2359 / DSM 70799 / NBRC 1267 / NRRL Y-1140 / WM37) (Yeast).